A 129-amino-acid chain; its full sequence is Fluoride-specific ion channel FluC (129 aa).

4 helical membrane-spanning segments follow: residues 5–25, 32–52, 60–80, and 99–119; these read LTIALFCAGGGLARYYLSGWV, AFPFGTLAVNLIGAYCIGLIM, LIPATLRLGLTVGFMGGLTTF, and AMVNALASVVMCLLCTWLGVI. Residues Gly75 and Thr78 each coordinate Na(+).

It belongs to the fluoride channel Fluc/FEX (TC 1.A.43) family.

It is found in the cell inner membrane. It catalyses the reaction fluoride(in) = fluoride(out). Na(+) is not transported, but it plays an essential structural role and its presence is essential for fluoride channel function. Functionally, fluoride-specific ion channel. Important for reducing fluoride concentration in the cell, thus reducing its toxicity. This Pelobacter propionicus (strain DSM 2379 / NBRC 103807 / OttBd1) protein is Fluoride-specific ion channel FluC.